A 1184-amino-acid chain; its full sequence is Protocadherin-12 (1184 aa).

An N-terminal signal peptide occupies residues 1–24 (MMQLLQLLLGLLGPGGYLFLLGDC). At 25–718 (QEVTTLTVKY…PGALSMSMLT (694 aa)) the chain is on the extracellular side. Cadherin domains lie at 28 to 135 (TTLT…QPRF), 136 to 244 (PKGE…SPAF), 245 to 352 (AESS…IPSI), 355 to 460 (TWAS…APVF), and 461 to 565 (EKSR…APEV). A glycan (N-linked (GlcNAc...) asparagine) is linked at N415. N-linked (GlcNAc...) asparagine glycosylation is found at N582, N659, and N662. A Cadherin 6 domain is found at 600-711 (PAGTDTPPLA…LRDSARKPGA (112 aa)). The chain crosses the membrane as a helical span at residues 719–739 (VICLAVLLGIFGLILALFMSI). Topologically, residues 740–1184 (CRTEKKDNRA…RGSSSSSRCL (445 aa)) are cytoplasmic. 2 disordered regions span residues 854 to 928 (RQRN…ESGP) and 973 to 1023 (QFQP…DPEE). At S859 the chain carries Phosphoserine. A compositionally biased stretch (acidic residues) spans 1012–1023 (PEQEEGPLDPEE). At S1062 the chain carries Phosphoserine. The disordered stretch occupies residues 1153–1184 (SAASGMKVQGDPGGKTGTEGKSRGSSSSSRCL). Over residues 1175-1184 (RGSSSSSRCL) the composition is skewed to low complexity.

Cleaved by ADAM10 close to the transmembrane domain to release the Protocadherin-12, secreted form in the serum. Cleavage results in reduced cellular adhesion in a cell migration assay. In terms of tissue distribution, expressed in highly vascularized tissues including the heart and placenta, but most tissues contain a low level of expression. Prominent expression in the spleen. Present in villous and extravillous trophoblast (at protein level).

Its subcellular location is the cell membrane. The protein resides in the cell junction. It localises to the secreted. In terms of biological role, cellular adhesion molecule that may play an important role in cell-cell interactions at interendothelial junctions. Acts as a regulator of cell migration, probably via increasing cell-cell adhesion. Promotes homotypic calcium-dependent aggregation and adhesion and clusters at intercellular junctions. Unable to bind to catenins, weakly associates with the cytoskeleton. In Homo sapiens (Human), this protein is Protocadherin-12.